A 176-amino-acid chain; its full sequence is MKKKYHLTPDELQLFKESIAGAKKLRQDTIVHHTPPKLGKKIAPERLLQEQVDASYYFSDEFQPLLDTDGPTRYVRPGVDNFEVKKLRRGDYSPEMFLDLHGLTQKQAKQELGALIAACKREHVHCACVMHGHGKHVLKQQTPLWMAQHPDVLAFHQAPKEWGGTAALLLLIELEE.

In terms of domain architecture, Smr spans 98–173 (LDLHGLTQKQ…GTAALLLLIE (76 aa)).

This sequence belongs to the SmrB family. Associates with collided ribosomes, but not with correctly translating polysomes.

Its function is as follows. Acts as a ribosome collision sensor. Detects stalled/collided disomes (pairs of ribosomes where the leading ribosome is stalled and a second ribosome has collided with it) and endonucleolytically cleaves mRNA at the 5' boundary of the stalled ribosome. Stalled/collided disomes form a new interface (primarily via the 30S subunits) that binds SmrB. Cleaved mRNA becomes available for tmRNA ligation, leading to ribosomal subunit dissociation and rescue of stalled ribosomes. The polypeptide is Ribosome rescue factor SmrB (Yersinia pseudotuberculosis serotype O:1b (strain IP 31758)).